Here is a 21-residue protein sequence, read N- to C-terminus: Cupiennin-6a (21 aa).

S21 carries the post-translational modification Serine amide.

As to expression, expressed by the venom gland.

The protein resides in the secreted. This is Cupiennin-6a from Cupiennius salei (American wandering spider).